Here is a 386-residue protein sequence, read N- to C-terminus: Short-chain dehydrogenase/reductase family 42E member 1 (386 aa).

The active-site Proton acceptor is the Tyr150. Lys154 is a binding site for NAD(+). Transmembrane regions (helical) follow at residues 279-299 and 363-383; these read FPLS…FFIS and YLIW…SWLP.

It belongs to the 3-beta-HSD family.

It localises to the membrane. The polypeptide is Short-chain dehydrogenase/reductase family 42E member 1 (sdr42e1) (Xenopus laevis (African clawed frog)).